A 223-amino-acid chain; its full sequence is MATSMIQRMFKQGTKIVCVGRNYAAHAKELGNAVPKEPVIFLKPTSSYLENGGTIEIPHPLDSLHHEVELALVIGQKARDVPESIAMDYIGGYAVALDMTARELQASAKASGLPWTVAKGQDTFTPISSVLPKAMVRDPDNLELWLKVDGETRQKGLTKDMIFKVPYLISYISSIMTLYEGDVILTGTPEGVGPVKIGQKITAGITGLSEVQFDVERRVKPLS.

The N-terminal 30 residues, 1–30, are a transit peptide targeting the mitochondrion; that stretch reads MATSMIQRMFKQGTKIVCVGRNYAAHAKEL. 3 residues coordinate Mg(2+): glutamate 67, glutamate 69, and aspartate 98.

The protein belongs to the FAH family. It depends on Mg(2+) as a cofactor. Requires Mn(2+) as cofactor.

The protein localises to the mitochondrion. It catalyses the reaction oxaloacetate = enol-oxaloacetate. Functionally, tautomerase that converts enol-oxaloacetate, a strong inhibitor of succinate dehydrogenase, to the physiological keto form of oxaloacetate. The sequence is that of Oxaloacetate tautomerase FAHD1, mitochondrial from Arabidopsis thaliana (Mouse-ear cress).